Reading from the N-terminus, the 464-residue chain is Glutamate--tRNA ligase (464 aa).

A 'HIGH' region motif is present at residues 9–19 (PSPTGYLHIGG). The short motif at 242 to 246 (KISKR) is the 'KMSKS' region element. Lys245 is an ATP binding site.

It belongs to the class-I aminoacyl-tRNA synthetase family. Glutamate--tRNA ligase type 1 subfamily. In terms of assembly, monomer.

The protein resides in the cytoplasm. The enzyme catalyses tRNA(Glu) + L-glutamate + ATP = L-glutamyl-tRNA(Glu) + AMP + diphosphate. Its function is as follows. Catalyzes the attachment of glutamate to tRNA(Glu) in a two-step reaction: glutamate is first activated by ATP to form Glu-AMP and then transferred to the acceptor end of tRNA(Glu). This is Glutamate--tRNA ligase from Neisseria meningitidis serogroup A / serotype 4A (strain DSM 15465 / Z2491).